A 634-amino-acid chain; its full sequence is Sodium-dependent multivitamin transporter (634 aa).

12 helical membrane-spanning segments follow: residues 23-43 (FSVVDYVVFGLLLVLSLVIGL), 65-85 (MGCLPVALSLLATFQSAVAIL), 100-120 (FLGCSYFLGLLIPAHIFIPVF), 142-162 (ICGTVTFIFQMVIYMGVALYA), 175-195 (LWLSVLALGIVCNIYTALGGL), 207-227 (LVMFLGQLVVIIVGAARVGGL), 255-275 (FWTLAFGGVFMMLSLYGVNQA), 295-315 (AVFPCQQVALCMSCLIGLVMF), 350-370 (LPGLFVACLFSGSLSTISSAF), 403-423 (FAYGLVCLGMAYISSHLGSVL), 427-447 (LSIFGMVGGPLLGLFCLGLFF), and 455-475 (AIVGLLTGLTMAFWIGIGSIV). Residues Asn488 and Asn497 are each glycosylated (N-linked (GlcNAc...) asparagine). A helical membrane pass occupies residues 526-546 (LWYSAHNSTTVIVVGLIVSLL).

The protein belongs to the sodium:solute symporter (SSF) (TC 2.A.21) family. Interacts with PDZD11. Expressed in the intestinal mucosa, liver and kidney (at protein level). Expressed in the colon.

The protein localises to the cell membrane. It localises to the apical cell membrane. It catalyses the reaction biotin(out) + 2 Na(+)(out) = biotin(in) + 2 Na(+)(in). It carries out the reaction (R)-pantothenate(out) + 2 Na(+)(out) = (R)-pantothenate(in) + 2 Na(+)(in). The enzyme catalyses (R)-lipoate(out) + 2 Na(+)(out) = (R)-lipoate(in) + 2 Na(+)(in). The catalysed reaction is iodide(out) + 2 Na(+)(out) = iodide(in) + 2 Na(+)(in). Sodium-dependent multivitamin transporter that mediates the electrogenic transport of pantothenate, biotin, lipoate and iodide. Functions as a Na(+)-coupled substrate symporter where the stoichiometry of Na(+):substrate is 2:1, creating an electrochemical Na(+) gradient used as driving force for substrate uptake. Required for biotin and pantothenate uptake in the intestine across the brush border membrane. Plays a role in the maintenance of intestinal mucosa integrity, by providing the gut mucosa with biotin. Contributes to the luminal uptake of biotin and pantothenate into the brain across the blood-brain barrier. The chain is Sodium-dependent multivitamin transporter from Mus musculus (Mouse).